The chain runs to 331 residues: D-galactose/methyl-galactoside binding periplasmic protein MglB (331 aa).

The first 24 residues, M1–A24, serve as a signal peptide directing secretion. Beta-D-galactose is bound by residues D38 and N115. The beta-D-glucose site is built by D38 and N115. Positions 158, 160, 162, 164, and 166 each coordinate Ca(2+). Beta-D-galactose is bound by residues H176, D178, and R182. Residues H176, D178, and R182 each coordinate beta-D-glucose. E229 lines the Ca(2+) pocket. Beta-D-galactose contacts are provided by N235, D259, and N279. Positions 235, 259, and 279 each coordinate beta-D-glucose.

It belongs to the bacterial solute-binding protein 2 family. The ABC transporter complex is composed of one ATP-binding protein (MglA), two transmembrane proteins (MglC) and a solute-binding protein (MglB).

The protein resides in the periplasm. Its function is as follows. Part of the ABC transporter complex MglABC involved in galactose/methyl galactoside import. The sequence is that of D-galactose/methyl-galactoside binding periplasmic protein MglB (mglB) from Haemophilus influenzae (strain ATCC 51907 / DSM 11121 / KW20 / Rd).